Reading from the N-terminus, the 142-residue chain is Large ribosomal subunit protein uL13 (142 aa).

This sequence belongs to the universal ribosomal protein uL13 family. In terms of assembly, part of the 50S ribosomal subunit.

Functionally, this protein is one of the early assembly proteins of the 50S ribosomal subunit, although it is not seen to bind rRNA by itself. It is important during the early stages of 50S assembly. In Desulfotalea psychrophila (strain LSv54 / DSM 12343), this protein is Large ribosomal subunit protein uL13.